Here is a 461-residue protein sequence, read N- to C-terminus: mRNA cap guanine-N(7) methyltransferase (461 aa).

A disordered region spans residues 1 to 117; sequence MESSVKASVD…RKLQPQDALE (117 aa). 4 positions are modified to phosphoserine: Ser-11, Ser-15, Ser-16, and Ser-58. Polar residues-rich tracts occupy residues 14–29 and 49–58; these read ESSP…SGQR and EQNSSYVQDS. The segment covering 65-93 has biased composition (basic and acidic residues); sequence LDVEIILDEKHSEDDGGASKRSKLERGGG. Phosphoserine occurs at positions 94 and 99. The short motif at 107 to 109 is the Nuclear localization signal element; it reads KRK. The mRNA cap 0 methyltransferase domain maps to 152–460; sequence SRIFYLRNFN…IYLVFAFEKQ (309 aa). Residue 161-162 participates in mRNA binding; it reads NN. 6 residues coordinate S-adenosyl-L-methionine: Lys-165, Gly-190, Asp-212, Asp-246, Gln-269, and Tyr-274.

Belongs to the class I-like SAM-binding methyltransferase superfamily. mRNA cap 0 methyltransferase family. As to quaternary structure, interacts with importin alpha, leading to stimulate both RNA-binding and methyltransferase activity. Interaction with importin alpha and beta is required for its nuclear localization, importin beta dissociating in response to RanGTP, allowing RNMT-importin alpha to bind RNA substrates. Interacts with elongating form of polymerase II and RNGTT. Interacts with RAMAC, this interaction significantly enhances RNA-binding and cap methyltransferase activity.

It is found in the nucleus. It carries out the reaction a 5'-end (5'-triphosphoguanosine)-ribonucleoside in mRNA + S-adenosyl-L-methionine = a 5'-end (N(7)-methyl 5'-triphosphoguanosine)-ribonucleoside in mRNA + S-adenosyl-L-homocysteine. Methyltransferase activity is activated by RAMAC. Its function is as follows. Catalytic subunit of the mRNA-capping methyltransferase RNMT:RAMAC complex that methylates the N7 position of the added guanosine to the 5'-cap structure of mRNAs. Binds RNA containing 5'-terminal GpppC. The chain is mRNA cap guanine-N(7) methyltransferase (Rnmt) from Rattus norvegicus (Rat).